Consider the following 211-residue polypeptide: tRNA (guanine-N(7)-)-methyltransferase (211 aa).

Residues Glu44, Asp69, Asp96, and Asp118 each contribute to the S-adenosyl-L-methionine site. The active site involves Asp118. Position 122 (Lys122) interacts with substrate. Positions 124–129 (RHEKRR) are interaction with RNA. Substrate is bound by residues Asp154 and 191–194 (TEYE).

The protein belongs to the class I-like SAM-binding methyltransferase superfamily. TrmB family.

The enzyme catalyses guanosine(46) in tRNA + S-adenosyl-L-methionine = N(7)-methylguanosine(46) in tRNA + S-adenosyl-L-homocysteine. The protein operates within tRNA modification; N(7)-methylguanine-tRNA biosynthesis. Its function is as follows. Catalyzes the formation of N(7)-methylguanine at position 46 (m7G46) in tRNA. This is tRNA (guanine-N(7)-)-methyltransferase from Streptococcus pneumoniae (strain JJA).